Consider the following 139-residue polypeptide: Protein Turandot B (139 aa).

Residues 1–21 form the signal peptide; the sequence is MNFKTALICFALLLIGTLCSA.

Belongs to the Turandot family.

It localises to the secreted. A humoral factor that may play a role in stress tolerance. This Drosophila simulans (Fruit fly) protein is Protein Turandot B.